Here is a 178-residue protein sequence, read N- to C-terminus: SCAN domain-containing protein 1 (178 aa).

The interval 1–107 (MAATEQSLAP…GSRPGPETFR (107 aa)) is disordered. Residues 9-18 (APAGSSAPPS) show a composition bias toward low complexity. The span at 36 to 54 (GSSSTPEAPSIPDSSNPSA) shows a compositional bias: polar residues. The SCAN box domain occupies 107-178 (RQRFRQFRYQ…RRRTDVRITG (72 aa)).

Interacts with ZNF202.

It localises to the nucleus. Its function is as follows. May regulate transcriptional activity. This is SCAN domain-containing protein 1 (SCAND1) from Bos taurus (Bovine).